We begin with the raw amino-acid sequence, 932 residues long: Isoleucine--tRNA ligase (932 aa).

The short motif at 57–67 (PYANGNIHLGH) is the 'HIGH' region element. E552 contacts L-isoleucyl-5'-AMP. The 'KMSKS' region motif lies at 593-597 (KMSKS). K596 provides a ligand contact to ATP. The Zn(2+) site is built by C889, C892, C911, and C914.

This sequence belongs to the class-I aminoacyl-tRNA synthetase family. IleS type 1 subfamily. In terms of assembly, monomer. The cofactor is Zn(2+).

It localises to the cytoplasm. The catalysed reaction is tRNA(Ile) + L-isoleucine + ATP = L-isoleucyl-tRNA(Ile) + AMP + diphosphate. In terms of biological role, catalyzes the attachment of isoleucine to tRNA(Ile). As IleRS can inadvertently accommodate and process structurally similar amino acids such as valine, to avoid such errors it has two additional distinct tRNA(Ile)-dependent editing activities. One activity is designated as 'pretransfer' editing and involves the hydrolysis of activated Val-AMP. The other activity is designated 'posttransfer' editing and involves deacylation of mischarged Val-tRNA(Ile). This is Isoleucine--tRNA ligase from Lactococcus lactis subsp. lactis (strain IL1403) (Streptococcus lactis).